The sequence spans 203 residues: Probable GTP-binding protein EngB (203 aa).

The region spanning 24–199 (DGSEVAFAGR…HTVIETWLGL (176 aa)) is the EngB-type G domain. GTP contacts are provided by residues 32 to 39 (GRSNAGKS), 59 to 63 (GRTQQ), 77 to 80 (DLPG), 144 to 147 (TKAD), and 178 to 180 (FSS). Positions 39 and 61 each coordinate Mg(2+).

Belongs to the TRAFAC class TrmE-Era-EngA-EngB-Septin-like GTPase superfamily. EngB GTPase family. Requires Mg(2+) as cofactor.

Functionally, necessary for normal cell division and for the maintenance of normal septation. The polypeptide is Probable GTP-binding protein EngB (Xylella fastidiosa (strain 9a5c)).